The chain runs to 193 residues: Adenylate kinase (193 aa).

11 to 16 (GSGKGT) serves as a coordination point for ATP. Positions 31–60 (STGDIFRANVKGETPLGLEAKKYMDAGDYV) are NMP. Residues T32, R37, 58 to 60 (DYV), 86 to 89 (GYPR), and Q93 each bind AMP. The interval 127–137 (GRAKESGRSDD) is LID. R128 is an ATP binding site. AMP is bound by residues R134 and R145. Residue G173 coordinates ATP.

The protein belongs to the adenylate kinase family. Monomer.

The protein resides in the cytoplasm. It carries out the reaction AMP + ATP = 2 ADP. Its pathway is purine metabolism; AMP biosynthesis via salvage pathway; AMP from ADP: step 1/1. Catalyzes the reversible transfer of the terminal phosphate group between ATP and AMP. Plays an important role in cellular energy homeostasis and in adenine nucleotide metabolism. In Renibacterium salmoninarum (strain ATCC 33209 / DSM 20767 / JCM 11484 / NBRC 15589 / NCIMB 2235), this protein is Adenylate kinase.